A 340-amino-acid polypeptide reads, in one-letter code: Guanine nucleotide-binding protein G(I)/G(S)/G(T) subunit beta-1 (340 aa).

WD repeat units lie at residues 53-83 (GHLAKIYAMHWGTDSRLLVSASQDGKLIIWD), 95-125 (LRSSWVMTCAYAPSGNYVACGGLDNICSIYN), 141-170 (GHTGYLSCCRFLDDNQIVTSSGDTTCALWD), 182-212 (GHTGDVMSLSLAPDTRLFVSGACDASAKLWD), 224-254 (GHESDINAICFFPNGNAFATGSDDATCRLFD), 268-298 (NIICGITSVAFSKSGRLLLAGYDDFNCNVWD), and 310-340 (GHDNRVSCLGVTDDGMAVATGSWDSFLKIWN).

This sequence belongs to the WD repeat G protein beta family. In terms of assembly, g proteins are composed of 3 units, alpha, beta and gamma.

Its function is as follows. Guanine nucleotide-binding proteins (G proteins) are involved as a modulator or transducer in various transmembrane signaling systems. The beta and gamma chains are required for the GTPase activity, for replacement of GDP by GTP, and for G protein-effector interaction. In Danio rerio (Zebrafish), this protein is Guanine nucleotide-binding protein G(I)/G(S)/G(T) subunit beta-1 (gnb1).